A 265-amino-acid polypeptide reads, in one-letter code: 4-hydroxy-tetrahydrodipicolinate reductase (265 aa).

NAD(+) is bound by residues 7–12 (GASGRM), Asp33, 96–98 (GTT), and 120–123 (AANF). His153 acts as the Proton donor/acceptor in catalysis. A (S)-2,3,4,5-tetrahydrodipicolinate-binding site is contributed by His154. The active-site Proton donor is Lys157. 163–164 (GT) lines the (S)-2,3,4,5-tetrahydrodipicolinate pocket.

The protein belongs to the DapB family.

Its subcellular location is the cytoplasm. The enzyme catalyses (S)-2,3,4,5-tetrahydrodipicolinate + NAD(+) + H2O = (2S,4S)-4-hydroxy-2,3,4,5-tetrahydrodipicolinate + NADH + H(+). It catalyses the reaction (S)-2,3,4,5-tetrahydrodipicolinate + NADP(+) + H2O = (2S,4S)-4-hydroxy-2,3,4,5-tetrahydrodipicolinate + NADPH + H(+). The protein operates within amino-acid biosynthesis; L-lysine biosynthesis via DAP pathway; (S)-tetrahydrodipicolinate from L-aspartate: step 4/4. Functionally, catalyzes the conversion of 4-hydroxy-tetrahydrodipicolinate (HTPA) to tetrahydrodipicolinate. This chain is 4-hydroxy-tetrahydrodipicolinate reductase, found in Cupriavidus necator (strain ATCC 17699 / DSM 428 / KCTC 22496 / NCIMB 10442 / H16 / Stanier 337) (Ralstonia eutropha).